A 118-amino-acid polypeptide reads, in one-letter code: NADH-quinone oxidoreductase subunit A 2 (118 aa).

3 helical membrane-spanning segments follow: residues 5–25 (YLPI…SVIF), 62–82 (LIAM…PWAV), and 87–107 (LGMF…VGYV).

It belongs to the complex I subunit 3 family. As to quaternary structure, NDH-1 is composed of 14 different subunits. Subunits NuoA, H, J, K, L, M, N constitute the membrane sector of the complex.

Its subcellular location is the cell inner membrane. The catalysed reaction is a quinone + NADH + 5 H(+)(in) = a quinol + NAD(+) + 4 H(+)(out). Functionally, NDH-1 shuttles electrons from NADH, via FMN and iron-sulfur (Fe-S) centers, to quinones in the respiratory chain. The immediate electron acceptor for the enzyme in this species is believed to be ubiquinone. Couples the redox reaction to proton translocation (for every two electrons transferred, four hydrogen ions are translocated across the cytoplasmic membrane), and thus conserves the redox energy in a proton gradient. This is NADH-quinone oxidoreductase subunit A 2 from Citrifermentans bemidjiense (strain ATCC BAA-1014 / DSM 16622 / JCM 12645 / Bem) (Geobacter bemidjiensis).